The chain runs to 310 residues: Cytosolic Fe-S cluster assembly factor Nubp1 homolog (310 aa).

[4Fe-4S] cluster is bound by residues Cys-9, Cys-23, Cys-26, and Cys-32. Gly-63–Ser-70 is an ATP binding site. Cys-240 and Cys-243 together coordinate [4Fe-4S] cluster.

The protein belongs to the Mrp/NBP35 ATP-binding proteins family. NUBP1/NBP35 subfamily. In terms of assembly, heterotetramer of 2 Nubp1 and 2 Nubp2 chains. Requires [4Fe-4S] cluster as cofactor.

It is found in the cytoplasm. Functionally, component of the cytosolic iron-sulfur (Fe/S) protein assembly (CIA) machinery. Required for maturation of extramitochondrial Fe-S proteins. The Nubp1-Nubp2 heterotetramer forms a Fe-S scaffold complex, mediating the de novo assembly of an Fe-S cluster and its transfer to target apoproteins. The polypeptide is Cytosolic Fe-S cluster assembly factor Nubp1 homolog (Drosophila mojavensis (Fruit fly)).